The primary structure comprises 603 residues: Adenine deaminase (603 aa).

Belongs to the metallo-dependent hydrolases superfamily. Adenine deaminase family. The cofactor is Mn(2+).

The catalysed reaction is adenine + H2O + H(+) = hypoxanthine + NH4(+). The sequence is that of Adenine deaminase from Ruegeria pomeroyi (strain ATCC 700808 / DSM 15171 / DSS-3) (Silicibacter pomeroyi).